A 285-amino-acid polypeptide reads, in one-letter code: Tryptophan synthase alpha chain (285 aa).

Active-site proton acceptor residues include glutamate 53 and aspartate 64.

The protein belongs to the TrpA family. In terms of assembly, tetramer of two alpha and two beta chains.

The enzyme catalyses (1S,2R)-1-C-(indol-3-yl)glycerol 3-phosphate + L-serine = D-glyceraldehyde 3-phosphate + L-tryptophan + H2O. It participates in amino-acid biosynthesis; L-tryptophan biosynthesis; L-tryptophan from chorismate: step 5/5. Functionally, the alpha subunit is responsible for the aldol cleavage of indoleglycerol phosphate to indole and glyceraldehyde 3-phosphate. The polypeptide is Tryptophan synthase alpha chain (Bordetella parapertussis (strain 12822 / ATCC BAA-587 / NCTC 13253)).